Reading from the N-terminus, the 140-residue chain is Large ribosomal subunit protein uL11 (140 aa).

This sequence belongs to the universal ribosomal protein uL11 family. As to quaternary structure, part of the ribosomal stalk of the 50S ribosomal subunit. Interacts with L10 and the large rRNA to form the base of the stalk. L10 forms an elongated spine to which L12 dimers bind in a sequential fashion forming a multimeric L10(L12)X complex. One or more lysine residues are methylated.

Its function is as follows. Forms part of the ribosomal stalk which helps the ribosome interact with GTP-bound translation factors. The chain is Large ribosomal subunit protein uL11 from Staphylococcus carnosus (strain TM300).